The sequence spans 436 residues: MEDTKKKKKKNINNNQDSKKKERHIVTWSQEEDVILREQITLHGTENWAIIASKFKDKSTRQCRRRWYTYLNSDFKRGGWSPEEDMLLCEAQRVFGNRWTEIAKVVSGRTDNAVKNRFTTLCKKRAKHEAMTKDSNSNTKRMLFLDGISTPRKSENETPIAKKLKRSHILDLTEISNYGRAEACVNQQIRSPFSVLARNATGIDSLEEQNQTSNVNESDGEGMFLKKDDPKVTALMQQAELLSSLAQKVNADNTEQSMENAWKVLQDFLNKGKENDLFRYGIPDIDFKIEEFKDLIEDLRSGYEDNQLSWRQPDLHDSPASSEYSSGSTIMVDQSGDKTQPFSADTQTEHKQVGEELLVPKNPDENMPISGEEKFSSPIQVTPLFRSLADGIPSPQFSESERSFLLKTLGIESSSPCPSANPSKPPPCKRVLLHSL.

Residues 1–11 show a composition bias toward basic residues; the sequence is MEDTKKKKKKN. Residues 1–23 are disordered; sequence MEDTKKKKKKNINNNQDSKKKER. A Nuclear localization signal 1 motif is present at residues 8 to 15; sequence KKKNINNN. HTH myb-type domains lie at 20-71 and 72-126; these read KKER…YTYL and NSDF…KKRA. 2 consecutive DNA-binding regions (H-T-H motif) follow at residues 48–71 and 99–122; these read WAIIASKFKDKSTRQCRRRWYTYL and WTEIAKVVSGRTDNAVKNRFTTLC. A Nuclear localization signal 2 motif is present at residues 151–158; sequence PRKSENET. A disordered region spans residues 309–328; sequence SWRQPDLHDSPASSEYSSGS. The segment covering 319–328 has biased composition (polar residues); sequence PASSEYSSGS.

In terms of assembly, interacts with RBR1. In terms of tissue distribution, expressed in all shoot organs with higher levels in leaves, stems, flowers, siliques and floral buds. Also detected in roots tips.

The protein localises to the nucleus. In terms of biological role, transcription factor that binds to DNA in promoters cis-regulatory element 5'-GGCGCGC-3' of cell cycle genes, including cyclins, cyclin-dependent kinases (CDKs), and components of the pre-replication complex. Binds to DNA in promoters cis-regulatory element 5'-AGCCG-3' of auxin regulated genes (e.g. PIN3 and PIN7). Together with FAMA and MYB88, ensures that stomata contain just two guard cells (GCs) by enforcing a single symmetric precursor cell division before stomatal maturity. Represses the expression of the mitosis-inducing factors CDKB1-1 and CDKA-1, specifically required for the last guard mother cells (GMC) symmetric divisions in the stomatal pathway. Represses CYCA2-3 in newly formed guard cells. Together with MYB88, regulates stomata spacing by restricting divisions late in the stomatal cell lineage thus limiting the number of GMC divisions. In collaboration with CDKB1-1 and CDKB1-2, restrict the G1/S transition and chloroplast and nuclear number during stomatal formation, and normally maintain fate and developmental progression throughout the stomatal cell lineage. Also involved in the shape regulation of pavement cells. Involved in sensing and/or transducing abiotic stress (e.g. drought and salt), probably via the positive regulation of NAC019. Regulates female reproduction being required for entry into megasporogenesis, probably via the regulation of cell cycle genes. Promotes histone H3K27me3 marks and represses stem cell gene expression. Required for lateral roots (LRs) initiation via the regulation of PIN3 expression in an auxin-dependent manner. Involved in responses to gravity stimulation in primary roots by regulating the transcription of PIN3 and PIN7 in gravity-sensing cells, thus modulating auxin asymmetric redistribution. In Arabidopsis thaliana (Mouse-ear cress), this protein is Transcription factor MYB124.